We begin with the raw amino-acid sequence, 469 residues long: ATP-dependent protease ATPase subunit HslU (469 aa).

Residues I24, 66–71 (GVGKTE), D282, E347, and R419 contribute to the ATP site.

This sequence belongs to the ClpX chaperone family. HslU subfamily. In terms of assembly, a double ring-shaped homohexamer of HslV is capped on each side by a ring-shaped HslU homohexamer. The assembly of the HslU/HslV complex is dependent on binding of ATP.

The protein resides in the cytoplasm. Its function is as follows. ATPase subunit of a proteasome-like degradation complex; this subunit has chaperone activity. The binding of ATP and its subsequent hydrolysis by HslU are essential for unfolding of protein substrates subsequently hydrolyzed by HslV. HslU recognizes the N-terminal part of its protein substrates and unfolds these before they are guided to HslV for hydrolysis. In Listeria welshimeri serovar 6b (strain ATCC 35897 / DSM 20650 / CCUG 15529 / CIP 8149 / NCTC 11857 / SLCC 5334 / V8), this protein is ATP-dependent protease ATPase subunit HslU.